A 64-amino-acid chain; its full sequence is Arasin 1 (64 aa).

The signal sequence occupies residues 1 to 25 (MERRTLLVVLLVCSCVVAAAAEASP). The tract at residues 22–43 (EASPSRWPSPGRPRPFPGRPKP) is disordered. Residues 26–48 (SRWPSPGRPRPFPGRPKPIFRPR) are pro/Arg-rich region responsible for antibacterial and antifungal activity. Pro residues predominate over residues 31–43 (PGRPRPFPGRPKP). The tract at residues 49 to 62 (PCNCYAPPCPCDRW) is cystein-containing C-terminal region important for stability but not essential for antimicrobial activity. 2 cysteine pairs are disulfide-bonded: Cys50–Cys59 and Cys52–Cys57. A propeptide spanning residues 63 to 64 (RH) is cleaved from the precursor.

In terms of assembly, interacts with chitin through the N-terminal region (26-48). This interaction may be important, since chitin is a component of the fungal cell wall, as well as of the crab exoskeleton (permitting a possible action of arasin in wound healing in case of lesions). Post-translationally, disulfide bonds are important for activity especially against Gram-negative bacteria, since the linearization of the peptide causes a strong decrease of activity on these bacteria. As to expression, mainly expressed in hemocytes. No or very low expression in heart, gills, inestines, and epidermis.

In terms of biological role, antimicrobial peptide that has a large activity spectrum with activity against Gram-positive, Gram-negative bacteria, as well as against fungi. Shows activity at micromolar concentrations. Displays minimal inhibitory concentration (MIC) values lower than minimal bactericidal concentrations (MBC). Synthetic peptides with similar activities than the full length peptide (composed of the first 23 or 25 amino acids (Arasin 1(26-48) or Arasin 1(26-50))) may have a dual mode of action depending on the peptide concentrations. At MIC concentrations, the peptide penetrates into the cytoplasm of target cells (tested on the Gram-negative E.coli). The two inner membrane proteins YgdD and SbmA may be required for this uptake. At concentrations higher than MIC, arasin may act by disrupting membranes. Full-length and N-terminal peptides do not show hemolytic activity. The protein is Arasin 1 of Hyas araneus (Atlantic lyre crab).